We begin with the raw amino-acid sequence, 341 residues long: DNA-directed RNA polymerase subunit alpha (341 aa).

Positions 1-233 are alpha N-terminal domain (alpha-NTD); the sequence is MIQDEVPVSA…DLFLPFLHTE (233 aa). An alpha C-terminal domain (alpha-CTD) region spans residues 262–341; that stretch reads DRMAKEVAFK…NLPRNKFSID (80 aa).

Belongs to the RNA polymerase alpha chain family. In plastids the minimal PEP RNA polymerase catalytic core is composed of four subunits: alpha, beta, beta', and beta''. When a (nuclear-encoded) sigma factor is associated with the core the holoenzyme is formed, which can initiate transcription.

Its subcellular location is the plastid. The protein resides in the chloroplast. The enzyme catalyses RNA(n) + a ribonucleoside 5'-triphosphate = RNA(n+1) + diphosphate. Its function is as follows. DNA-dependent RNA polymerase catalyzes the transcription of DNA into RNA using the four ribonucleoside triphosphates as substrates. The chain is DNA-directed RNA polymerase subunit alpha from Angiopteris evecta (Mule's foot fern).